The sequence spans 194 residues: Peptidyl-tRNA hydrolase (194 aa).

Y17 lines the tRNA pocket. Residue H22 is the Proton acceptor of the active site. Positions 68, 70, and 116 each coordinate tRNA.

This sequence belongs to the PTH family. Monomer.

Its subcellular location is the cytoplasm. The catalysed reaction is an N-acyl-L-alpha-aminoacyl-tRNA + H2O = an N-acyl-L-amino acid + a tRNA + H(+). Functionally, hydrolyzes ribosome-free peptidyl-tRNAs (with 1 or more amino acids incorporated), which drop off the ribosome during protein synthesis, or as a result of ribosome stalling. Its function is as follows. Catalyzes the release of premature peptidyl moieties from peptidyl-tRNA molecules trapped in stalled 50S ribosomal subunits, and thus maintains levels of free tRNAs and 50S ribosomes. This Actinobacillus succinogenes (strain ATCC 55618 / DSM 22257 / CCUG 43843 / 130Z) protein is Peptidyl-tRNA hydrolase.